Here is a 1192-residue protein sequence, read N- to C-terminus: MSELDDLLNEMLAESEAALNGQSTINLNNNNSNNNNNNNNNGNSATKISFQEQMPNGNGNSSTTTTTAAQQSATEKRKSRLSQHPSNLNEGGFDYLDTLLNDMSDESIRNSIKTDNSRIKSLRLTSTFDLESTLKDLEETFMKDSSIQNKRKPSSYLSKNLSPPSNPSNIISNNNASTLPLPPPPSQQDDVVIIAKLPPPVSISLPPPPTTEELPLPPPSTEELQLPPPPPTTTTADEQILTDSVKNGNPILKRVSSERAIILTKEAIDAADLLDEMIESFGGIPEPNGNNSLPKEIKTTSIPTPIVTPSTTTSTNTTTAATVNKLNASKSPNGTLTTRPAAKLGAPVDIQVSSPKAPTPIPTLSSPSPSQSAAPQPAAPQPTPTSQPQPPTTTVSTPVSPTFKDSDQLLDDMISHFKESNSNLLTSSSNLDPSAPKVVYTSQQFYPLSVEEQSLQSKVKVQLTPDEQVIQKILGNNDLDDDITNKNNDNNSNGNNNNKELIDEQNQIEQQQSDKSWYIKAQPSDIIGSGNNGTTQRAGIHKDKRIVMKQWNFITSQATPMLFNEIEQLVAIKHPNILALAGASFDNQTFTTFTEYITGSNLDIVIKNLDEKNELQLILRLSEEIASAMSFLHSFNIVHRSLHPKNILLNSDLKIYIKDYGFTSLKDETLKKKFMSFQLKNQLLHTQYLAPELFNVLSGSKGGYDTKVDVFSFGVLLWEMFARDIKLSDLKSNTVNGYTHYLRPPLPNCPFTIEKLIKLCLSTDPSVRPTFTTILKILRQPLHTIQRFNKPTQQQQQQQQQDQQQQQPEQQLTSSTSSTSTQDSLVSQEQVEEKIKNEMNNLLNPNKRFNESLDPEKRVKIEKIANVVKDLISQPTLLNLHRASQTIDQLCKNVENIEYLLEADFVPLIFQLMDQPYDEIQLSCLKQFSTLIEHNEEIMNLFRNLLGINILMETLNSQKENILFITLRLLSQLSNGADREENREQILIKGGIPLLINLLSHQNELIRLQILWCLTLLLESNSVQVEFVKLGGVNQLLDMMVHSINSGFDLRVASALARVISLKSVQDQINLGHYRERVVKKYLSLLGDTQFEALRMLGLEAIACLVSNKDSQFILTASNIVDLLLSYLDPNSTSMAPQMTALKIILVLSVNPIHIPYLKSSNIIEPLQYLKSSPHPSIQKAVEKILMLVSSK.

Disordered regions lie at residues 23 to 90 (STIN…NLNE), 144 to 189 (DSSI…SQQD), 201 to 236 (VSIS…TTTA), 301 to 406 (SIPT…FKDS), and 478 to 499 (DLDD…NNNK). The span at 26 to 43 (NLNNNNSNNNNNNNNNGN) shows a compositional bias: low complexity. Residues 44 to 60 (SATKISFQEQMPNGNGN) are compositionally biased toward polar residues. Composition is skewed to low complexity over residues 61–73 (SSTT…QQSA) and 154–175 (SSYL…SNNN). Residues 201–232 (VSISLPPPPTTEELPLPPPSTEELQLPPPPPT) are compositionally biased toward pro residues. Positions 301 to 324 (SIPTPIVTPSTTTSTNTTTAATVN) are enriched in low complexity. Positions 325-338 (KLNASKSPNGTLTT) are enriched in polar residues. The segment covering 362–376 (PTLSSPSPSQSAAPQ) has biased composition (low complexity). Positions 377–391 (PAAPQPTPTSQPQPP) are enriched in pro residues. Composition is skewed to low complexity over residues 392 to 402 (TTTVSTPVSPT) and 485 to 498 (NKNN…NNNN). Residues 521–783 (AQPSDIIGSG…ILKILRQPLH (263 aa)) form the Protein kinase domain. Residues 527 to 535 (IGSGNNGTT) and Lys549 each bind ATP. The tract at residues 790–831 (KPTQQQQQQQQQDQQQQQPEQQLTSSTSSTSTQDSLVSQEQV) is disordered. A compositionally biased stretch (low complexity) spans 791–828 (PTQQQQQQQQQDQQQQQPEQQLTSSTSSTSTQDSLVSQ).

It belongs to the protein kinase superfamily. TKL Ser/Thr protein kinase family.

The sequence is that of Probable inactive serine/threonine-protein kinase DDB_G0280131 from Dictyostelium discoideum (Social amoeba).